We begin with the raw amino-acid sequence, 1097 residues long: RE1-silencing transcription factor (1097 aa).

The interaction with SIN3A stretch occupies residues 32-122 (DLHDLSKAEL…SLELSVVEPQ (91 aa)). The interval 43-57 (APQLIMLANVALTGE) is interaction with SIN3B. 2 disordered regions span residues 83–103 (NFSDSEEGEGLEESADIKGEP) and 127–159 (ASGAPDIYSSNKDLPPETPGAEDKGKSSKTKPF). The segment covering 86 to 96 (DSEEGEGLEES) has biased composition (acidic residues). The tract at residues 145–418 (PGAEDKGKSS…KSKHPTCPNK (274 aa)) is interaction with ZFP90. The C2H2-type 1 zinc-finger motif lies at 159 to 181 (FRCKPCQYEAESEEQFVHHIRVH). Positions 201 to 212 (SGSSTAEEGDFS) are required for binding to the neuron-restrictive silencer element. 7 C2H2-type zinc fingers span residues 216–238 (IRCDRCGYNTNRYDHYTAHLKHH), 248–270 (YKCIICTYTTVSEYHWRKHLRNH), 276–298 (YTCGKCNYFSDRKNNYVQHVRTH), 304–326 (YKCELCPYSSSQKTHLTRHMRTH), 332–355 (FKCDQCSYVASNQHEVTRHARQVH), 361–383 (LNCPHCDYKTADRSNFKKHVELH), and 389–412 (FNCPVCDYAASKKCNLQYHFKSKH). Basic and acidic residues predominate over residues 452-479 (KIKGDVAGKKNEKSVKAEKRDVSKEKKP). Disordered stretches follow at residues 452-642 (KIKG…MEGA), 774-837 (KEPV…EQVL), 853-938 (ESVS…NGKH), and 961-1049 (GINS…NAKE). Residues 480–490 (SNNVSVIQVTT) are compositionally biased toward polar residues. 2 stretches are compositionally biased toward basic and acidic residues: residues 495–504 (SVTEVKEMDV) and 559–570 (PKGDSKVEENKK). Positions 577–593 (KSTKKKTLKNKSSKKSS) are enriched in basic residues. Residues 803–836 (PPLHMEPISKKPPLRKDKKEKSNMQSERARKEQV) are compositionally biased toward basic and acidic residues. At Ser-864 the chain carries Phosphoserine. Positions 913–930 (INESTHISSSGQNLNTPE) are enriched in polar residues. A Phosphoserine modification is found at Ser-971. Residues 1009–1087 (EGIHSHEGSD…HLNRHLVNVY (79 aa)) are interaction with RCOR1. The C2H2-type 9 zinc finger occupies 1060-1082 (FVCIFCDRSFRKGKDYSKHLNRH).

In terms of assembly, isoform 1 and isoform 3 form heterodimers. Isoform 3: Forms homodimers and homooligomers; binds to the neuron-restrictive silencer element (NRSE) as monomer. Interacts with SIN3A, SIN3B and RCOR1. Interacts with CDYL. Interacts with EHMT1 and EHMT2 only in the presence of CDYL. Part of a complex containing at least CDYL, REST, WIZ, SETB1, EHMT1 and EHMT2. Interacts (via zinc-finger DNA-binding domain) with ZFP90 (via N- and C-termini); the interaction inhibits REST repressor activity. Interacts (via C2H2-type zinc finger 5) with PRICKLE1. Interacts with FBXW11 and BTRC. Interacts with USP7. In terms of processing, O-glycosylated. Phosphorylated; phosphorylation is required for ubiquitination. Post-translationally, ubiquitinated; ubiquitination is mediated by BTRC and leads to proteasomal degradation in G2 phase. Ubiquitination increases during neuronal differentiation. Deubiquitinated by USP7; leading to its stabilization and promoting the maintenance of neural progenitor cells. As to expression, expressed in neurons of the prefrontal cortex, in hippocampal pyramidal neurons, dentate gyrus granule neurons and cerebellar Purkinje and granule neurons (at protein level). Expressed in dopaminergic neurons of the substantia nigra (at protein level). Expressed in neural progenitor cells (at protein level). In patients suffering from Alzheimer disease, frontotemporal dementia or dementia with Lewy bodies, decreased nuclear levels have been observed in neurons of the prefrontal cortex and the hippocampus, but not in neurons of the dentate gyrus and cerebellum (at protein level). In patients with Parkinson disease or dementia with Lewy bodies, decreased nuclear levels have been observed in dopaminergic neurons and in cortical neurons and localization to Lewy bodies and pale bodies was detected (at protein level). Expressed at higher levels in weakly invasive breast cancer cell lines and at lower levels in highly invasive breast cancer lines (at protein level). Ubiquitous. Expressed at higher levels in the tissues of the lymphocytic compartment, including spleen, thymus, peripheral blood lymphocytes and ovary.

It localises to the nucleus. The protein resides in the cytoplasm. Transcriptional repressor which binds neuron-restrictive silencer element (NRSE) and represses neuronal gene transcription in non-neuronal cells. Restricts the expression of neuronal genes by associating with two distinct corepressors, SIN3A and RCOR1, which in turn recruit histone deacetylase to the promoters of REST-regulated genes. Mediates repression by recruiting the BHC complex at RE1/NRSE sites which acts by deacetylating and demethylating specific sites on histones, thereby acting as a chromatin modifier. Transcriptional repression by REST-CDYL via the recruitment of histone methyltransferase EHMT2 may be important in transformation suppression. Represses the expression of SRRM4 in non-neural cells to prevent the activation of neural-specific splicing events and to prevent production of REST isoform 3. Repressor activity may be inhibited by forming heterodimers with isoform 3, thereby preventing binding to NRSE or binding to corepressors and leading to derepression of target genes. Also maintains repression of neuronal genes in neural stem cells, and allows transcription and differentiation into neurons by dissociation from RE1/NRSE sites of target genes. Thereby is involved in maintaining the quiescent state of adult neural stem cells and preventing premature differentiation into mature neurons. Plays a role in the developmental switch in synaptic NMDA receptor composition during postnatal development, by repressing GRIN2B expression and thereby altering NMDA receptor properties from containing primarily GRIN2B to primarily GRIN2A subunits. Acts as a regulator of osteoblast differentiation. Key repressor of gene expression in hypoxia; represses genes in hypoxia by direct binding to an RE1/NRSE site on their promoter regions. May also function in stress resistance in the brain during aging; possibly by regulating expression of genes involved in cell death and in the stress response. Repressor of gene expression in the hippocampus after ischemia by directly binding to RE1/NRSE sites and recruiting SIN3A and RCOR1 to promoters of target genes, thereby promoting changes in chromatin modifications and ischemia-induced cell death. After ischemia, might play a role in repression of miR-132 expression in hippocampal neurons, thereby leading to neuronal cell death. Negatively regulates the expression of SRRM3 in breast cancer cell lines. In terms of biological role, binds to the 3' region of the neuron-restrictive silencer element (NRSE), with lower affinity than full-length REST isoform 1. Exhibits weaker repressor activity compared to isoform 1. May negatively regulate the repressor activity of isoform 1 by binding to isoform 1, thereby preventing its binding to NRSE and leading to derepression of target genes. However, in another study, does not appear to be implicated in repressor activity of a NRSE motif-containing reporter construct nor in inhibitory activity on the isoform 1 transcriptional repressor activity. Post-transcriptional inactivation of REST by SRRM4-dependent alternative splicing into isoform 3 is required in mechanosensory hair cells in the inner ear for derepression of neuronal genes and hearing. This Homo sapiens (Human) protein is RE1-silencing transcription factor (REST).